Here is a 1095-residue protein sequence, read N- to C-terminus: Solute carrier family 12 member 1 (1095 aa).

Topologically, residues 1–173 (MSVSIPSNSV…EEDMTGVVKF (173 aa)) are cytoplasmic. Positions 16–19 (RFQV) match the RFXV motif motif. The segment at 29-49 (AAAVGDSADPPHYEETSFGDE) is disordered. Phosphoserine occurs at positions 57 and 87. Phosphothreonine occurs at positions 91, 96, 101, and 114. Position 116 is a phosphoserine (Ser-116). Ser-126 bears the Phosphoserine; by AMPK mark. The residue at position 144 (Ser-144) is a Phosphoserine. Residues 174-194 (GWVKGVLVRCMLNIWGVMLFI) traverse the membrane as a helical segment. Over 195–197 (RLS) the chain is Extracellular. A helical transmembrane segment spans residues 198–218 (WIVGEAGIGLGVLIILLSTMV). Over 219–255 (TSITGLSTSAIATNGFVRGGGAYYLISRSLGPEFGGS) the chain is Cytoplasmic. The chain crosses the membrane as a helical span at residues 256–276 (IGLIFAFANAVAVAMYVVGFA). Residues 277–298 (ETVVDLLKESDSMMVDPTNDIR) are Extracellular-facing. The helical transmembrane segment at 299 to 319 (IIGSITVVILLGISVAGMEWE) threads the bilayer. The Cytoplasmic portion of the chain corresponds to 320–323 (AKAQ). Residues 324 to 344 (VILLVILLIAIANFFIGTVIP) traverse the membrane as a helical segment. Residues 345–375 (SNNEKKSRGFFNYQASIFAENFGPSFTKGEG) are Extracellular-facing. A helical membrane pass occupies residues 376 to 396 (FFSVFAIFFPAATGILAGANI). The Cytoplasmic portion of the chain corresponds to 397-413 (SGDLEDPQDAIPRGTML). The chain crosses the membrane as a helical span at residues 414-434 (AIFITTVAYIGVAICVAACVV). Residues 435–546 (RDATGSMNDT…NNEPLRGYFL (112 aa)) are Extracellular-facing. N-linked (GlcNAc...) asparagine glycosylation is found at Asn-442 and Asn-452. 2 helical membrane-spanning segments follow: residues 547-567 (TFVI…APII) and 568-588 (SNFF…ASYA). Topologically, residues 589 to 605 (KSPGWRPAYGIYNMWVS) are extracellular. A helical transmembrane segment spans residues 606 to 626 (LFGAILCCAVMFVINWWAAVI). Residues 627 to 1095 (TYVIELFLYI…NHKNVLTFYS (469 aa)) lie on the Cytoplasmic side of the membrane.

It belongs to the SLC12A transporter family. When phosphorylated, interacts with PPP3CB. Post-translationally, phosphorylated at Ser-87, Thr-96 and Thr-101 by OXSR1/OSR1 and STK39/SPAK downstream of WNK kinases (WNK1, WNK2, WNK3 or WNK4), promoting its activity. Short-term cyclosporine administration increases SLC12A1 phosphorylation in kidney thick ascending limb, possibly through the inhibition of PPP3CB/calcineurin A beta phosphatase. Predominantly expressed in kidney (at protein level). As to expression, kidney-specific; most highly expressed in the outer stripe of outer medulla (at protein level). In terms of tissue distribution, kidney-specific; most highly expressed in the cortical thick ascending limb (at protein level). Kidney-specific; most highly expressed in the inner stripe of outer medulla (at protein level).

It localises to the apical cell membrane. The enzyme catalyses K(+)(out) + 2 chloride(out) + Na(+)(out) = K(+)(in) + 2 chloride(in) + Na(+)(in). Activated following phosphorylation by OXSR1/OSR1 and STK39/SPAK downstream of WNK kinases (WNK1, WNK2, WNK3 or WNK4). With respect to regulation, inhibited by mercury dichloride and diuretic drug bumetaide. Inactive in isotonic conditions. In terms of biological role, renal sodium, potassium and chloride ion cotransporter that mediates the transepithelial NaCl reabsorption in the thick ascending limb and plays an essential role in the urinary concentration and volume regulation. Electrically silent transporter system. Its function is as follows. High affinity, high capacity cotransporter for sodium, potassium and chloride ions, with a coupling ratio 1Na(+):1K(+):2Cl(-). High affinity, low capacity cotransporter for sodium, potassium and chloride ions, with a coupling ratio 1Na(+):1K(+):2Cl(-). Functionally, low affinity, low capacity cotransporter for sodium, potassium and chloride ions, with a coupling ratio 1Na(+):1K(+):2Cl(-). The chain is Solute carrier family 12 member 1 (Slc12a1) from Mus musculus (Mouse).